The chain runs to 799 residues: MVHRGRTLKSDTDVTSLNASTVSHQSKPFRQFSTRSRAKSNASFKGLRRVLTHDGTLDNDYFNKHNVSQKCKSSDALFRKRTISGLNMTALTRVKSNQGKRSASFHSPVHNTLLSPKNSSHSNTGTAGFGLKPRRSKSTQSVLSLRDAQESKKSESTTDEEVECFSEDNIEDGKVNNDKVIAEHVMPEEKKNVQQLNQNELQSPDSIDEQEEDKSGTDGKENHRAVSLPLPHLSSNNYFGESSHSIEHQKDGETSPSSIETKLNATSVINEEGQSKVTKEADIDDLSSHSQNLRASLVKAGDNISEAPYDKEKKILDVGNTLAAHKSNQKPSHSDEQFDQEDHIDAPRSNSSRKSDSSFMSLRRQSSKQHKLLNEEEDLIKPDDISSAGTKDIEGHSLLENYAPNMILSQSTGVERRFENSSSIQNSLGNEIHDSGEHMASGDTFNELDDGKLRKSKKNGGRSQLGQNIPNSQSTFPTIANIGSKDNNVPQHNFSTSISSLTNNLRRAAPESFHGSRMNNIFHKKGNQNLLLRSNDLNKNSAAPASPLSNEHITSSTNSGSDANRQSNSGAKFNSFAQFLKSDGIDAESRTQRKLWLQRENSIMDLSSQNDGSDSIFMAGNIDAKREFERISHEYSNVKRFYNPLDEALLRVQPIITGNANNIRKKSHNDAQSIAHSSSDTDHKDEDDLLFTNYDKKFDDLYPHLASAKIQAVLSGIWKSESYLFNKDVNPINKNRTTSTNHSVGHTASQNARNLLRGPMGSSTTLHHQRVINSLQPTTRAVNRRMENVGYMHTQPQQR.

The segment at 18–41 (NASTVSHQSKPFRQFSTRSRAKSN) is disordered. Thr-52 and Thr-82 each carry phosphothreonine. 5 positions are modified to phosphoserine: Ser-84, Ser-104, Ser-107, Ser-115, and Ser-144. A compositionally biased stretch (polar residues) spans 97 to 126 (NQGKRSASFHSPVHNTLLSPKNSSHSNTGT). 2 disordered regions span residues 97–171 (NQGK…DNIE) and 201–284 (LQSP…ADID). Basic and acidic residues predominate over residues 147-156 (DAQESKKSES). Acidic residues predominate over residues 157-170 (TTDEEVECFSEDNI). Phosphoserine is present on residues Ser-203 and Ser-215. Residues 213 to 224 (DKSGTDGKENHR) are compositionally biased toward basic and acidic residues. Positions 233–243 (LSSNNYFGESS) are enriched in polar residues. The segment covering 244-253 (HSIEHQKDGE) has biased composition (basic and acidic residues). Polar residues predominate over residues 254–269 (TSPSSIETKLNATSVI). Ser-290 bears the Phosphoserine mark. The interval 324–391 (AHKSNQKPSH…PDDISSAGTK (68 aa)) is disordered. The span at 332–346 (SHSDEQFDQEDHIDA) shows a compositional bias: basic and acidic residues. Low complexity predominate over residues 348–363 (RSNSSRKSDSSFMSLR). The residue at position 397 (Ser-397) is a Phosphoserine. 2 disordered regions span residues 418–476 (FENS…QSTF) and 538–568 (NKNS…RQSN). 2 stretches are compositionally biased toward polar residues: residues 420–429 (NSSSIQNSLG) and 461–476 (GRSQ…QSTF). Ser-575 carries the phosphoserine modification. Positions 663–685 (IRKKSHNDAQSIAHSSSDTDHKD) are disordered. Phosphoserine is present on Ser-707.

This sequence belongs to the TORC subunit TCO89 family. The target of rapamycin complex 1 (TORC1) is composed of at least KOG1, LST8, TCO89 and either TOR1 (TORC1-A) or TOR2 (TORC1-B). Interacts with PIB2; following activation of PIB2 by glutamine or cysteine. TORC1 binds to and is inhibited by FKBP-rapamycin.

The protein resides in the cell membrane. It localises to the vacuole membrane. In terms of biological role, component of TORC1, which regulates multiple cellular processes to control cell growth in response to environmental signals. Nutrient limitation and environmental stress signals cause inactivation of TORC1. Active TORC1 positively controls ribosome biogenesis via control of rRNA, ribosomal protein and tRNA gene expression, and rRNA processing. TORC1 positively controls protein biosynthesis by regulation of mRNA stability, translation initiation factor activity, and high-affinity amino acid permeases that serve to provide amino acids for use by the translation machinery. TORC1 also promotes growth by sequestering a number of nutrient and general stress-responsive transcription factors in the cytoplasm. TORC1 negatively controls macroautophagy, a process to recycle surplus cytoplasmic mass under nutrient starvation conditions. This Saccharomyces cerevisiae (strain ATCC 204508 / S288c) (Baker's yeast) protein is Target of rapamycin complex 1 subunit TCO89 (TCO89).